The sequence spans 105 residues: Met repressor (105 aa).

It belongs to the MetJ family. As to quaternary structure, homodimer.

The protein resides in the cytoplasm. This regulatory protein, when combined with SAM (S-adenosylmethionine) represses the expression of the methionine regulon and of enzymes involved in SAM synthesis. The polypeptide is Met repressor (Pectobacterium carotovorum subsp. carotovorum (strain PC1)).